The sequence spans 916 residues: Chitin synthase B (916 aa).

Disordered stretches follow at residues 1–75 (MAYH…GYSL) and 118–141 (ARSE…GGNG). Basic and acidic residues predominate over residues 14-26 (HTYDDGHQLRDLS). Residues 59-75 (RGLTASPVQRPTSGYSL) are compositionally biased toward polar residues. Helical transmembrane passes span 544 to 561 (RWLN…MHFG), 588 to 608 (FLTW…MDLV), 629 to 649 (IINT…FILA), 664 to 684 (SFVA…YLVV), 716 to 736 (IIII…FMYL), 845 to 865 (LVTL…SEGL), and 884 to 904 (ALLW…TWFL).

Belongs to the chitin synthase family. Class III subfamily. As to quaternary structure, interacts with kibesin kinA. In terms of processing, activity requires trypsin activation, suggesting a zymogenic nature. Post-translationally, phosphorylated at yet unidentified residues in a N-terminal disordered region-dependent manner.

The protein resides in the cell membrane. It localises to the cell tip. The protein localises to the cell septum. It carries out the reaction [(1-&gt;4)-N-acetyl-beta-D-glucosaminyl](n) + UDP-N-acetyl-alpha-D-glucosamine = [(1-&gt;4)-N-acetyl-beta-D-glucosaminyl](n+1) + UDP + H(+). Its activity is regulated as follows. Activity is stimulated by Mg(2+) and is inhibited by polyoxin D. In terms of biological role, polymerizes chitin, a structural polymer of the cell wall and septum, by transferring the sugar moiety of UDP-GlcNAc to the non-reducing end of the growing chitin polymer. Does not substantially contribute to the rigidity of the cell wall but is necessary for normal hyphal growth and organization. In addition to its functions in the formation of normal cell walls of hyphae, is also involved in conidiophore and conidia development. This is Chitin synthase B from Emericella nidulans (strain FGSC A4 / ATCC 38163 / CBS 112.46 / NRRL 194 / M139) (Aspergillus nidulans).